Consider the following 299-residue polypeptide: Tyrosine recombinase XerD (299 aa).

The 88-residue stretch at 2 to 89 (ETVNNNLQQF…AIRSFHQFLL (88 aa)) folds into the Core-binding (CB) domain. The region spanning 110-293 (RLPKALTIEE…TKTRMRDVYA (184 aa)) is the Tyr recombinase domain. Residues Arg150, Lys174, His245, Arg248, and His271 contribute to the active site. The active-site O-(3'-phospho-DNA)-tyrosine intermediate is the Tyr280.

The protein belongs to the 'phage' integrase family. XerD subfamily. In terms of assembly, forms a cyclic heterotetrameric complex composed of two molecules of XerC and two molecules of XerD.

Its subcellular location is the cytoplasm. In terms of biological role, site-specific tyrosine recombinase, which acts by catalyzing the cutting and rejoining of the recombining DNA molecules. The XerC-XerD complex is essential to convert dimers of the bacterial chromosome into monomers to permit their segregation at cell division. It also contributes to the segregational stability of plasmids. The chain is Tyrosine recombinase XerD from Halalkalibacterium halodurans (strain ATCC BAA-125 / DSM 18197 / FERM 7344 / JCM 9153 / C-125) (Bacillus halodurans).